The chain runs to 532 residues: MTTKYIFVTGGVVSSLGKGITAASLGRLLKNRGMKVTIQKFDPYINVDPGTMSPYQHGEVFVTDDGAETDLDLGHYERFIDINLNKNSNVTTGKIYSSVLKKERRGDYLGGTVQVIPHVTNEIKERVFRAGRETNADVVITEIGGTVGDIESLPFLEAIRQIKSDIGVDNVMYIHCTLIPYLAAAGEMKSKPTQHSVKELRSLGIQPNVIVVRTEKPVPEEMKEKIALFCDIRKDSVIEARDADTLYEVPLDLQAQNLDEIVCDHLNLSCQEADMTEWKSLVEKVKNLSGLVKIALVGKYVALPDAYLSVAEALRHAGYAFDADINIKWVDSEDVTAENVAEQLQGVDGILVPGGFGDRGIEGKIEAIRYAREQKIPFLGICLGMQLASIEFARNVLGLEGAHSAEINPDTPHPIIDLLPEQKDVEDMGGTLRLGLYPCKLKNGTLAQSAYNDQVIYERHRHRYEFNNQYREQMEAKGFMFSGTSPDGRLVEIVELGDHPFFIASQFHPEFVSRPTRPQPLFREFIQASLRK.

Residues 1 to 268 (MTTKYIFVTG…DEIVCDHLNL (268 aa)) form an amidoligase domain region. Serine 14 is a binding site for CTP. Serine 14 contacts UTP. Position 15 to 20 (15 to 20 (SLGKGI)) interacts with ATP. Tyrosine 55 contacts L-glutamine. Aspartate 72 contributes to the ATP binding site. Residues aspartate 72 and glutamate 142 each contribute to the Mg(2+) site. CTP is bound by residues 149-151 (DIE), 189-194 (KSKPTQ), and lysine 225. UTP is bound by residues 189 to 194 (KSKPTQ) and lysine 225. 241–243 (RDA) is an ATP binding site. The 240-residue stretch at 293–532 (KIALVGKYVA…REFIQASLRK (240 aa)) folds into the Glutamine amidotransferase type-1 domain. An L-glutamine-binding site is contributed by glycine 355. Cysteine 382 functions as the Nucleophile; for glutamine hydrolysis in the catalytic mechanism. L-glutamine contacts are provided by residues 383–386 (LGMQ), glutamate 406, and arginine 463. Active-site residues include histidine 508 and glutamate 510.

Belongs to the CTP synthase family. In terms of assembly, homotetramer.

It catalyses the reaction UTP + L-glutamine + ATP + H2O = CTP + L-glutamate + ADP + phosphate + 2 H(+). The enzyme catalyses L-glutamine + H2O = L-glutamate + NH4(+). It carries out the reaction UTP + NH4(+) + ATP = CTP + ADP + phosphate + 2 H(+). It functions in the pathway pyrimidine metabolism; CTP biosynthesis via de novo pathway; CTP from UDP: step 2/2. Its activity is regulated as follows. Allosterically activated by GTP, when glutamine is the substrate; GTP has no effect on the reaction when ammonia is the substrate. The allosteric effector GTP functions by stabilizing the protein conformation that binds the tetrahedral intermediate(s) formed during glutamine hydrolysis. Inhibited by the product CTP, via allosteric rather than competitive inhibition. Its function is as follows. Catalyzes the ATP-dependent amination of UTP to CTP with either L-glutamine or ammonia as the source of nitrogen. Regulates intracellular CTP levels through interactions with the four ribonucleotide triphosphates. In Halalkalibacterium halodurans (strain ATCC BAA-125 / DSM 18197 / FERM 7344 / JCM 9153 / C-125) (Bacillus halodurans), this protein is CTP synthase.